The sequence spans 884 residues: MKILFEFIQDKLDIDLQTNSTYKENLKCGHFNGLDEILTTCFALPNSRKIALPCLPGDLSHKAVIDHCIIYLLTGELYNNVLTFGYKIARNEDVNNSLFCHSANVNVTLLKGAAWKMFHSLVGTYAFVDLLINYTVIQFNGQFFTQIVGNRCNEPHLPPKWAQRSSSSSATAAQIKQLTEPVTNKQFLHKLNINSSSFFPYSKILPSSSSIKKLTDLREAIFPTNLVKIPQRLKVRINLTLQKLLKRHKRLNYVSILNSICPPLEGTVLDLSHLSRQSPKERVLKFIIVILQKLLPQEMFGSKKNKGKIIKNLNLLLSLPLNGYLPFDSLLKKLRLKDFRWLFISDIWFTKHNFENLNQLAICFISWLFRQLIPKIIQTFFYCTEISSTVTIVYFRHDTWNKLITPFIVEYFKTYLVENNVCRNHNSYTLSNFNHSKMRIIPKKSNNEFRIIAIPCRGADEEEFTIYKENHKNAIQPTQKILEYLRNKRPTSFTKIYSPTQIADRIKEFKQRLLKKFNNVLPELYFMKFDVKSCYDSIPRMECMRILKDALKNENGFFVRSQYFFNTNTGVLKLFNVVNASRVPKPYELYIDNVRTVHLSNQDVINVVEMEIFKTALWVEDKCYIREDGLFQGSSLSAPIVDLVYDDLLEFYSEFKASPSQDTLILKLADDFLIISTDQQQVINIKKLAMGGFQKYNAKANRDKILAVSSQSDDDTVIQFCAMHIFVKELEVWKHSSTMNNFHIRSKSSKGIFRSLIALFNTRISYKTIDTNLNSTNTVLMQIDHVVKNISECYKSAFKDLSINVTQNMQFHSFLQRIIEMTVSGCPITKCDPLIEYEVRFTILNGFLESLSSNTSKFKDNIILLRKEIQHLQAYIYIYIHIVN.

The 304-residue stretch at 422–725 (CRNHNSYTLS…TVIQFCAMHI (304 aa)) folds into the Reverse transcriptase domain. Mg(2+) is bound by residues aspartate 530, aspartate 670, and aspartate 671.

The protein belongs to the reverse transcriptase family. Telomerase subfamily. Catalytic subunit of the telomerase holoenzyme complex composed minimally of EST2 and the telomerase RNA template component.

Its subcellular location is the nucleus. The protein localises to the chromosome. The protein resides in the telomere. It carries out the reaction DNA(n) + a 2'-deoxyribonucleoside 5'-triphosphate = DNA(n+1) + diphosphate. In terms of biological role, telomerase is a ribonucleoprotein enzyme essential for the replication of chromosome termini in most eukaryotes. It elongates telomeres. It is a reverse transcriptase that adds simple sequence repeats to chromosome ends by copying a template sequence within the RNA component of the enzyme. This chain is Telomerase reverse transcriptase (EST2), found in Saccharomyces cerevisiae (strain ATCC 204508 / S288c) (Baker's yeast).